We begin with the raw amino-acid sequence, 216 residues long: Somatotropin (216 aa).

An N-terminal signal peptide occupies residues 1–26 (MAAGPRTSMLLAFALLCLPWTQEVGA). Zn(2+) is bound at residue His45. Cys78 and Cys189 form a disulfide bridge. Ser131 carries the phosphoserine modification. Zn(2+) is bound at residue Glu198. Cysteines 206 and 214 form a disulfide.

It belongs to the somatotropin/prolactin family.

It localises to the secreted. Its function is as follows. Plays an important role in growth control. Its major role in stimulating body growth is to stimulate the liver and other tissues to secrete IGF1. It stimulates both the differentiation and proliferation of myoblasts. It also stimulates amino acid uptake and protein synthesis in muscle and other tissues. The sequence is that of Somatotropin (GH1) from Balaenoptera physalus (Fin whale).